The sequence spans 311 residues: Porphobilinogen deaminase (311 aa).

Cys241 is subject to S-(dipyrrolylmethanemethyl)cysteine.

This sequence belongs to the HMBS family. In terms of assembly, monomer. Dipyrromethane serves as cofactor.

It catalyses the reaction 4 porphobilinogen + H2O = hydroxymethylbilane + 4 NH4(+). The protein operates within porphyrin-containing compound metabolism; protoporphyrin-IX biosynthesis; coproporphyrinogen-III from 5-aminolevulinate: step 2/4. Tetrapolymerization of the monopyrrole PBG into the hydroxymethylbilane pre-uroporphyrinogen in several discrete steps. This chain is Porphobilinogen deaminase, found in Bacillus pumilus (strain SAFR-032).